The following is an 807-amino-acid chain: Hyaluronate lyase (807 aa).

Residues 1–40 (MTYRIKKWQKLSTITLLMAGVITLNGGEFRSVDKHQIAVA) form the signal peptide. Residues Asn-241, His-297, and Tyr-306 contribute to the active site.

This sequence belongs to the polysaccharide lyase 8 family.

The protein resides in the secreted. It catalyses the reaction [hyaluronan](n) = n 3-(4-deoxy-beta-D-gluc-4-enuronosyl)-N-acetyl-D-glucosamine + H2O. The chain is Hyaluronate lyase from Staphylococcus aureus (strain NCTC 8325 / PS 47).